A 211-amino-acid polypeptide reads, in one-letter code: Protein-L-isoaspartate O-methyltransferase (211 aa).

Residue S60 is part of the active site.

Belongs to the methyltransferase superfamily. L-isoaspartyl/D-aspartyl protein methyltransferase family.

The protein localises to the cytoplasm. It carries out the reaction [protein]-L-isoaspartate + S-adenosyl-L-methionine = [protein]-L-isoaspartate alpha-methyl ester + S-adenosyl-L-homocysteine. Catalyzes the methyl esterification of L-isoaspartyl residues in peptides and proteins that result from spontaneous decomposition of normal L-aspartyl and L-asparaginyl residues. It plays a role in the repair and/or degradation of damaged proteins. This chain is Protein-L-isoaspartate O-methyltransferase, found in Alteromonas mediterranea (strain DSM 17117 / CIP 110805 / LMG 28347 / Deep ecotype).